Consider the following 270-residue polypeptide: 23S rRNA (adenosine(1067)-2'-O)-methyltransferase (270 aa).

Residues arginine 135, arginine 165, glycine 218, isoleucine 238, and leucine 247 each coordinate S-adenosyl-L-methionine.

This sequence belongs to the class IV-like SAM-binding methyltransferase superfamily. RNA methyltransferase TsnR/AvirB family.

It catalyses the reaction adenosine(1067) in 23S rRNA + S-adenosyl-L-methionine = 2'-O-methyladenosine(1067) in 23S rRNA + S-adenosyl-L-homocysteine + H(+). Specifically methylates the adenosine-1067 in 23S ribosomal RNA. Confers resistance to antibiotic thiostrepton. This is 23S rRNA (adenosine(1067)-2'-O)-methyltransferase from Streptomyces laurentii.